A 223-amino-acid chain; its full sequence is MASSLVSSFQPRSAFLGDRNVFKVSSTPFAQVGYSSKTIECKESRIGKQPIAVPSNVTIALEGQDLKVKGPLGELALTYPREVELTKEESGFLRVKKTVETRRANQMHGLFRTLTDNMVVGVSKGFEKKLILVGVGYRATVDGKELVLNLGFSHPVKMQIPDSLKVKVEENTRITVSGYDKSEIGQFAATVRKWRPPEPYKGKGVKYSDEIVRRKEGKAGKKK.

The transit peptide at 1–41 directs the protein to the chloroplast; that stretch reads MASSLVSSFQPRSAFLGDRNVFKVSSTPFAQVGYSSKTIEC.

It belongs to the universal ribosomal protein uL6 family. In terms of assembly, part of the 50S ribosomal subunit.

Its subcellular location is the plastid. The protein resides in the chloroplast. Its function is as follows. This protein binds directly to 23S ribosomal RNA and is located at the aminoacyl-tRNA binding site of the peptidyltransferase center. The protein is Large ribosomal subunit protein uL6c (RPL6) of Arabidopsis thaliana (Mouse-ear cress).